The following is a 281-amino-acid chain: Ribosomal RNA large subunit methyltransferase J (281 aa).

S-adenosyl-L-methionine contacts are provided by residues H19, H42, S101, E119, 144 to 145 (NG), and D165. D165 (proton acceptor) is an active-site residue.

This sequence belongs to the RlmJ family. Monomer.

It catalyses the reaction adenosine(2030) in 23S rRNA + S-adenosyl-L-methionine = N(6)-methyladenosine(2030) in 23S rRNA + S-adenosyl-L-homocysteine + H(+). In terms of biological role, specifically methylates the adenine in position 2030 of 23S rRNA. The protein is Ribosomal RNA large subunit methyltransferase J of Haemophilus influenzae (strain ATCC 51907 / DSM 11121 / KW20 / Rd).